A 773-amino-acid polypeptide reads, in one-letter code: Ethylene receptor 2 (773 aa).

4 helical membrane-spanning segments follow: residues 4–24, 53–73, 82–102, and 122–142; these read EIAS…VLAI, VSDF…LYFV, WVLF…LLHG, and LTAL…PLLL. 2 residues coordinate Cu cation: Cys94 and His98. The GAF domain occupies 187 to 331; the sequence is DRHTILYTTL…VVADQVTVAL (145 aa). Positions 374 to 614 constitute a Histidine kinase domain; sequence TMSEGMRRPM…PETMSLLLRF (241 aa). In terms of domain architecture, Response regulatory spans 647-766; that stretch reads QVLLVDTNDS…AMESELRRVL (120 aa). Asp702 bears the 4-aspartylphosphate mark. A Glycyl lysine isopeptide (Lys-Gly) (interchain with G-Cter in ubiquitin) cross-link involves residue Lys751.

This sequence belongs to the ethylene receptor family. As to quaternary structure, heteromer with ETR1. Binds to MRF3/ECIP1. Requires Cu cation as cofactor. Post-translationally, autophosphorylated predominantly on Ser residues. In terms of tissue distribution, expressed in seedlings, roots, leaves, flowers, mature siliques, shoot apical meristems, leaf primordia, inflorescence meristems, young floral meristems, developing petals, carpels and ovules. Low expression in stamens.

It is found in the endoplasmic reticulum membrane. Ethylene receptor related to bacterial two-component regulators. Acts as a redundant negative regulator of ethylene signaling. This is Ethylene receptor 2 from Arabidopsis thaliana (Mouse-ear cress).